The primary structure comprises 27 residues: Secretin (27 aa).

Val-27 carries the valine amide modification.

Belongs to the glucagon family.

It localises to the secreted. Functionally, hormone involved in different processes, such as regulation of the pH of the duodenal content, food intake and water homeostasis. Exerts its biological effects by binding to secretin receptor (SCTR), a G-protein coupled receptor expressed in the basolateral domain of several cells. Acts as a key gastrointestinal hormone by regulating the pH of the duodenal content. Secreted by S cells of the duodenum in the crypts of Lieberkuehn and regulates the pH of the duodenum by (1) inhibiting the secretion of gastric acid from the parietal cells of the stomach and (2) stimulating the production of bicarbonate (NaHCO(3)) from the ductal cells of the pancreas. Production of bicarbonate is essential to neutralize the pH and ensure no damage is done to the small intestine by the gastric acid. In addition to regulating the pH of the duodenal content, plays a central role in diet induced thermogenesis: acts as a non-sympathetic brown fat (BAT) activator mediating prandial thermogenesis, which consequentially induces satiation. Mechanistically, secretin released by the gut after a meal binds to secretin receptor (SCTR) in brown adipocytes, activating brown fat thermogenesis by stimulating lipolysis, which is sensed in the brain and promotes satiation. Also able to stimulate lipolysis in white adipocytes. Also plays an important role in cellular osmoregulation: released into the systemic circulation in response to hyperosmolality and acts at different levels in the hypothalamus, pituitary and kidney to regulate water homeostasis. Also plays a role in the central nervous system, possibly by acting as a neuropeptide hormone: required for hippocampal synaptic function and neural progenitor cells maintenance. The polypeptide is Secretin (Canis lupus familiaris (Dog)).